Consider the following 635-residue polypeptide: Biosynthetic arginine decarboxylase (635 aa).

N6-(pyridoxal phosphate)lysine is present on Lys-100. Position 282 to 292 (282 to 292 (VDIGGGLGVDY)) interacts with substrate.

The protein belongs to the Orn/Lys/Arg decarboxylase class-II family. SpeA subfamily. Mg(2+) serves as cofactor. The cofactor is pyridoxal 5'-phosphate.

The catalysed reaction is L-arginine + H(+) = agmatine + CO2. Its pathway is amine and polyamine biosynthesis; agmatine biosynthesis; agmatine from L-arginine: step 1/1. Functionally, catalyzes the biosynthesis of agmatine from arginine. The chain is Biosynthetic arginine decarboxylase from Geotalea daltonii (strain DSM 22248 / JCM 15807 / FRC-32) (Geobacter daltonii).